Here is a 1179-residue protein sequence, read N- to C-terminus: uncharacterized protein (1179 aa).

This is an uncharacterized protein from Ictaluridae (bullhead catfishes).